The following is a 496-amino-acid chain: Serine/threonine-protein kinase Sgk3 (496 aa).

Residues 12 to 124 (SCPSVSIPSS…AFLQMDSPRH (113 aa)) enclose the PX domain. The segment at 121-157 (SPRHQSDPSEDEDERSTSKPHSTSRNINLGPTGNPHA) is disordered. Ser-126 and Ser-129 each carry phosphoserine. Residues 139–151 (KPHSTSRNINLGP) show a composition bias toward polar residues. Residues 162–419 (FDFLKVIGKG…FLEIQNHPFF (258 aa)) form the Protein kinase domain. ATP-binding positions include 168 to 176 (IGKGSFGKV) and Lys-191. A Nuclear localization signal motif is present at residues 195 to 205 (KKIVLNRKEQK). Residue Asp-286 is the Proton acceptor of the active site. Residue Thr-320 is modified to Phosphothreonine; by PDPK1. An AGC-kinase C-terminal domain is found at 420–496 (ESLSWTDLVQ…YAPPSEDLFL (77 aa)). Ser-486 is subject to Phosphoserine.

It belongs to the protein kinase superfamily. AGC Ser/Thr protein kinase family. As to quaternary structure, interacts with GSK3B and FLII. Interacts with PDPK1 in a phosphorylation-dependent manner. In terms of processing, activated by phosphorylation on Ser-486 by an unknown kinase (may be mTORC2 but not confirmed), transforming it into a substrate for PDPK1 which then phosphorylates it on Thr-320. As to expression, widely expressed, predominantly in the heart, spleen and 7-day embryo.

It is found in the cytoplasmic vesicle. The protein localises to the early endosome. Its subcellular location is the recycling endosome. The catalysed reaction is L-seryl-[protein] + ATP = O-phospho-L-seryl-[protein] + ADP + H(+). It catalyses the reaction L-threonyl-[protein] + ATP = O-phospho-L-threonyl-[protein] + ADP + H(+). With respect to regulation, two specific sites, one in the kinase domain (Thr-320) and the other in the C-terminal regulatory region (Ser-486), need to be phosphorylated for its full activation. In terms of biological role, serine/threonine-protein kinase which is involved in the regulation of a wide variety of ion channels, membrane transporters, cell growth, proliferation, survival and migration. Up-regulates Na(+) channels: SCNN1A/ENAC and SCN5A, K(+) channels: KCNA3/KV1.3, KCNE1, KCNQ1 and KCNH2/HERG, epithelial Ca(2+) channels: TRPV5 and TRPV6, chloride channel: BSND, creatine transporter: SLC6A8, Na(+)/dicarboxylate cotransporter: SLC13A2/NADC1, Na(+)-dependent phosphate cotransporter: SLC34A2/NAPI-2B, amino acid transporters: SLC1A5/ASCT2 and SLC6A19, glutamate transporters: SLC1A3/EAAT1, SLC1A6/EAAT4 and SLC1A7/EAAT5, glutamate receptors: GRIA1/GLUR1 and GRIK2/GLUR6, Na(+)/H(+) exchanger: SLC9A3/NHE3, and the Na(+)/K(+) ATPase. Plays a role in the regulation of renal tubular phosphate transport and bone density. Phosphorylates NEDD4L and GSK3B. Positively regulates ER transcription activity through phosphorylation of FLII. Negatively regulates the function of ITCH/AIP4 via its phosphorylation and thereby prevents CXCR4 from being efficiently sorted to lysosomes. The protein is Serine/threonine-protein kinase Sgk3 (Sgk3) of Mus musculus (Mouse).